The following is a 288-amino-acid chain: ATP synthase gamma chain (288 aa).

The protein belongs to the ATPase gamma chain family. In terms of assembly, F-type ATPases have 2 components, CF(1) - the catalytic core - and CF(0) - the membrane proton channel. CF(1) has five subunits: alpha(3), beta(3), gamma(1), delta(1), epsilon(1). CF(0) has three main subunits: a, b and c.

The protein localises to the cell membrane. Its function is as follows. Produces ATP from ADP in the presence of a proton gradient across the membrane. The gamma chain is believed to be important in regulating ATPase activity and the flow of protons through the CF(0) complex. This chain is ATP synthase gamma chain, found in Staphylococcus epidermidis (strain ATCC 35984 / DSM 28319 / BCRC 17069 / CCUG 31568 / BM 3577 / RP62A).